The following is a 316-amino-acid chain: Annexin D5 (316 aa).

At Ala2 the chain carries N-acetylalanine. 4 Annexin repeats span residues 11–82 (PSPR…LWMP), 83–154 (EAVE…AYLN), 166–238 (ASVE…TILQ), and 242–313 (NSCF…SLLG). Positions 24, 26, 28, and 68 each coordinate Ca(2+). Ser95 carries the post-translational modification Phosphoserine. Thr112 is subject to Phosphothreonine. Ca(2+) is bound at residue Gly259. Tyr284 bears the Phosphotyrosine mark. The Ca(2+) site is built by Asp299 and Thr300.

This sequence belongs to the annexin (TC 1.A.31.1) family. As to expression, expressed mainly in roots and flowers. Lower in stems and leaves.

In Arabidopsis thaliana (Mouse-ear cress), this protein is Annexin D5 (ANN5).